Here is a 398-residue protein sequence, read N- to C-terminus: Formate-dependent phosphoribosylglycinamide formyltransferase (398 aa).

Residues 21 to 22 and E81 each bind N(1)-(5-phospho-beta-D-ribosyl)glycinamide; that span reads EL. ATP contacts are provided by residues R113, K154, 194-197, and E202; that span reads EEYV. The 197-residue stretch at 118-314 folds into the ATP-grasp domain; sequence RFAAEKVKVP…EFQVHVRSAL (197 aa). Residues E273 and E285 each contribute to the Mg(2+) site. N(1)-(5-phospho-beta-D-ribosyl)glycinamide is bound by residues D292, K362, and 369–370; that span reads RR.

It belongs to the PurK/PurT family. As to quaternary structure, homodimer.

It carries out the reaction N(1)-(5-phospho-beta-D-ribosyl)glycinamide + formate + ATP = N(2)-formyl-N(1)-(5-phospho-beta-D-ribosyl)glycinamide + ADP + phosphate + H(+). The protein operates within purine metabolism; IMP biosynthesis via de novo pathway; N(2)-formyl-N(1)-(5-phospho-D-ribosyl)glycinamide from N(1)-(5-phospho-D-ribosyl)glycinamide (formate route): step 1/1. Involved in the de novo purine biosynthesis. Catalyzes the transfer of formate to 5-phospho-ribosyl-glycinamide (GAR), producing 5-phospho-ribosyl-N-formylglycinamide (FGAR). Formate is provided by PurU via hydrolysis of 10-formyl-tetrahydrofolate. In Sulfolobus acidocaldarius (strain ATCC 33909 / DSM 639 / JCM 8929 / NBRC 15157 / NCIMB 11770), this protein is Formate-dependent phosphoribosylglycinamide formyltransferase.